The sequence spans 667 residues: Transmembrane 9 superfamily member 1 (667 aa).

The first 22 residues, 1–22 (MIYKMAHVQLLLLYFFVSTVKA), serve as a signal peptide directing secretion. The Lumenal portion of the chain corresponds to 23-302 (FYLPGVAPTT…DKYLHVYDPS (280 aa)). N-linked (GlcNAc...) asparagine glycans are attached at residues N61 and N282. Residues 303–323 (IQWFSLINFSLVVVLLSSVVI) form a helical membrane-spanning segment. The Cytoplasmic segment spans residues 324 to 370 (HSLLRALKSDFARYNELNLDDDFQEDSGWKLNHGDVFRSPSQSLTLS). A helical transmembrane segment spans residues 371–391 (ILVGSGVQLFLMVTCSIFFAA). Topologically, residues 392 to 405 (LGFLSPSSRGSLAT) are lumenal. Residues 406–426 (VMFILYALFGFVGSYTSMGIY) traverse the membrane as a helical segment. Over 427–442 (KFFNGPYWKANLILTP) the chain is Cytoplasmic. The chain crosses the membrane as a helical span at residues 443-463 (LLVPGAILLIIIALNFFLMFV). The Lumenal segment spans residues 464 to 474 (HSSGVIPASTL). A helical membrane pass occupies residues 475–495 (FFMVFLWFLFSIPLSFAGSLI). Residues 496–527 (ARKRCHWDEHPTKTNQIARQIPFQPWYLKTIP) lie on the Cytoplasmic side of the membrane. The helical transmembrane segment at 528 to 548 (ATLIAGIFPFGSIAVELYFIY) threads the bilayer. Topologically, residues 549–560 (TSLWFNKIFYMF) are lumenal. A helical membrane pass occupies residues 561-581 (GFLFFSFLLLTLTSSLVTILI). The Cytoplasmic portion of the chain corresponds to 582 to 596 (TYHSLCLENWKWQWR). The chain crosses the membrane as a helical span at residues 597 to 617 (GFIIGGAGCALYVFIHSILFT). Residues 618–635 (KFKLGGFTTIVLYVGYSS) lie on the Lumenal side of the membrane. A helical transmembrane segment spans residues 636 to 656 (VISLLCCLVTGSIGFISSMLF). Residues 657–667 (VRKIYSSIKVD) lie on the Cytoplasmic side of the membrane.

This sequence belongs to the nonaspanin (TM9SF) (TC 9.A.2) family.

The protein localises to the endosome membrane. The protein resides in the vacuole membrane. In terms of biological role, with TMN2 and TMN3, plays a critical role in the late stages of a nutrient-controlled pathway notably regulating FLO11 gene expression. Acts downstream of RAS2 and TOR. Essential for cell adhesion and filamentous growth. May play a role as effector of cellular copper homeostasis. The protein is Transmembrane 9 superfamily member 1 (EMP70) of Saccharomyces cerevisiae (strain ATCC 204508 / S288c) (Baker's yeast).